The following is a 295-amino-acid chain: Guided entry of tail-anchored proteins factor CAMLG (295 aa).

Disordered regions lie at residues Met-1–Pro-73 and Gly-127–His-148. Residues Met-1–Arg-188 are Cytoplasmic-facing. The segment covering Ala-15–Gln-24 has biased composition (polar residues). Ser-53 carries the phosphoserine modification. The segment covering Gly-127 to Leu-138 has biased composition (basic and acidic residues). A helical transmembrane segment spans residues Ile-189 to Val-206. Topologically, residues Cys-207–Lys-208 are lumenal. Cys-207 and Cys-283 form a disulfide bridge. The chain crosses the membrane as a helical span at residues Tyr-209–Tyr-227. Over Lys-228–Glu-268 the chain is Cytoplasmic. A helical membrane pass occupies residues Val-269–Leu-287. Residues Glu-288–Pro-295 are Lumenal-facing.

In terms of assembly, component of the Golgi to ER traffic (GET) complex, which is composed of GET1/WRB, CAMLG/GET2 and GET3/TRC40. Within the complex, GET1 and CAMLG form a heterotetramer which is stabilized by phosphatidylinositol binding and which binds to the GET3 homodimer. Interacts (via C-terminus) with GET1. Interacts (via N-terminus) with GET3. GET3 shows a higher affinity for CAMLG than for GET1. Interacts (via N-terminus) with TNFRSF13B/TACI (via C-terminus). As to expression, in the central nervous system, expressed in astrocytes, microglia and neurons (at protein level).

It is found in the endoplasmic reticulum membrane. In terms of biological role, required for the post-translational delivery of tail-anchored (TA) proteins to the endoplasmic reticulum. Together with GET1/WRB, acts as a membrane receptor for soluble GET3/TRC40, which recognizes and selectively binds the transmembrane domain of TA proteins in the cytosol. Required for the stability of GET1. Stimulates calcium signaling in T cells through its involvement in elevation of intracellular calcium. Essential for the survival of peripheral follicular B cells. This Rattus norvegicus (Rat) protein is Guided entry of tail-anchored proteins factor CAMLG.